The primary structure comprises 274 residues: Nitrogenase iron protein (274 aa).

8–15 (GKGGIGKS) contributes to the ATP binding site. Cys94 contacts [4Fe-4S] cluster. Arg97 carries the post-translational modification ADP-ribosylarginine; by dinitrogenase reductase ADP-ribosyltransferase. Cys131 lines the [4Fe-4S] cluster pocket.

It belongs to the NifH/BchL/ChlL family. Homodimer. The cofactor is [4Fe-4S] cluster. The reversible ADP-ribosylation of Arg-97 inactivates the nitrogenase reductase and regulates nitrogenase activity.

The catalysed reaction is N2 + 8 reduced [2Fe-2S]-[ferredoxin] + 16 ATP + 16 H2O = H2 + 8 oxidized [2Fe-2S]-[ferredoxin] + 2 NH4(+) + 16 ADP + 16 phosphate + 6 H(+). In terms of biological role, the key enzymatic reactions in nitrogen fixation are catalyzed by the nitrogenase complex, which has 2 components: the iron protein and the molybdenum-iron protein. The protein is Nitrogenase iron protein of Prosthecochloris aestuarii (strain DSM 271 / SK 413).